A 511-amino-acid chain; its full sequence is Cytochrome P450 77A2 (511 aa).

Cys-456 contacts heme.

This sequence belongs to the cytochrome P450 family. Requires heme as cofactor.

The sequence is that of Cytochrome P450 77A2 (CYP77A2) from Solanum melongena (Eggplant).